Here is a 97-residue protein sequence, read N- to C-terminus: UPF0235 protein AZOSEA09540 (97 aa).

This sequence belongs to the UPF0235 family.

The chain is UPF0235 protein AZOSEA09540 from Aromatoleum aromaticum (strain DSM 19018 / LMG 30748 / EbN1) (Azoarcus sp. (strain EbN1)).